Here is a 427-residue protein sequence, read N- to C-terminus: Extracellular superoxide dismutase [Cu-Zn] 2 (427 aa).

The first 20 residues, 1 to 20, serve as a signal peptide directing secretion; sequence MNKLIISLLIVLSAISIISA. Residues 21–406 are Extracellular-facing; sequence DYQYGYCKFG…PTETSQPGTS (386 aa). N-linked (GlcNAc...) asparagine glycosylation is found at N38, N57, N81, N190, and N218. Residues H257, H259, and H275 each coordinate Cu cation. The Zn(2+) site is built by H275 and H283. N-linked (GlcNAc...) asparagine glycosylation occurs at N288. Residues H292 and D295 each coordinate Zn(2+). H331 serves as a coordination point for Cu cation. N-linked (GlcNAc...) asparagine glycosylation occurs at N376. The segment at 381–404 is disordered; sequence GESTIEPSPTPSTTPTPTETSQPG. Over residues 395-404 the composition is skewed to low complexity; the sequence is PTPTETSQPG. A helical transmembrane segment spans residues 407-426; sequence SYLAPFFVLILSSLISVILI. Position 427 (L427) is a topological domain, cytoplasmic.

Belongs to the Cu-Zn superoxide dismutase family. The cofactor is Cu cation. Zn(2+) serves as cofactor.

It localises to the cell membrane. It catalyses the reaction 2 superoxide + 2 H(+) = H2O2 + O2. Its function is as follows. Protect the extracellular space from toxic effect of reactive oxygen intermediates by converting superoxyde radicals into hydrogen peroxyde and oxygen. This Dictyostelium discoideum (Social amoeba) protein is Extracellular superoxide dismutase [Cu-Zn] 2 (sodB).